Consider the following 322-residue polypeptide: UDP-N-acetylenolpyruvoylglucosamine reductase (322 aa).

Positions 36–202 (RAGGPAQVLF…TSVLFEGVPG (167 aa)) constitute an FAD-binding PCMH-type domain. Arginine 182 is an active-site residue. The Proton donor role is filled by serine 231. Residue glutamate 301 is part of the active site.

Belongs to the MurB family. Requires FAD as cofactor.

It localises to the cytoplasm. The enzyme catalyses UDP-N-acetyl-alpha-D-muramate + NADP(+) = UDP-N-acetyl-3-O-(1-carboxyvinyl)-alpha-D-glucosamine + NADPH + H(+). It participates in cell wall biogenesis; peptidoglycan biosynthesis. Functionally, cell wall formation. The sequence is that of UDP-N-acetylenolpyruvoylglucosamine reductase from Brucella canis (strain ATCC 23365 / NCTC 10854 / RM-666).